Here is a 402-residue protein sequence, read N- to C-terminus: 8-amino-7-oxononanoate synthase (402 aa).

R26 serves as a coordination point for substrate. Residue 114-115 coordinates pyridoxal 5'-phosphate; it reads GY. Residue H139 participates in substrate binding. Pyridoxal 5'-phosphate contacts are provided by S182, H210, and T239. K242 carries the N6-(pyridoxal phosphate)lysine modification. T359 contacts substrate.

This sequence belongs to the class-II pyridoxal-phosphate-dependent aminotransferase family. BioF subfamily. Homodimer. Pyridoxal 5'-phosphate is required as a cofactor.

It catalyses the reaction 6-carboxyhexanoyl-[ACP] + L-alanine + H(+) = (8S)-8-amino-7-oxononanoate + holo-[ACP] + CO2. It participates in cofactor biosynthesis; biotin biosynthesis. Its function is as follows. Catalyzes the decarboxylative condensation of pimeloyl-[acyl-carrier protein] and L-alanine to produce 8-amino-7-oxononanoate (AON), [acyl-carrier protein], and carbon dioxide. The chain is 8-amino-7-oxononanoate synthase from Halorhodospira halophila (strain DSM 244 / SL1) (Ectothiorhodospira halophila (strain DSM 244 / SL1)).